A 353-amino-acid polypeptide reads, in one-letter code: MTAILERRDSETLWGRFCNWITSTENRLYIGWFGVLMIPTLLTATSVFIIAFIAAPPVDIDGIREPVSGSLLYGNNIICGAIIPTSAAIGLHFYPIWEAASVDEWLYNGGPYELIVLHFLLGVACYMGREWELSFRLGMRPWIAVAYSAPVAAATAVFLIYPIGQGSFSDGMPLGISGTFNFMIVFQAEHNILMHPFHMLGVAGVFGGSLFSAMHGSLVTSSLIRETTENESANEGYRFGQEEETYNIVAAHGYFGRLIFQYASFNNSRSLHFFLAAWPVVGIWFTALGISTMAFNLNGFNFNQSVVDSQGRVINTWADIINRANLGMEVMHERNAHNFPLDLAAVEAPSING.

Residue Thr-2 is modified to N-acetylthreonine. Position 2 is a phosphothreonine (Thr-2). A run of 3 helical transmembrane segments spans residues 29–46 (YIGW…TATS), 118–133 (HFLL…EWEL), and 142–156 (WIAV…AATA). Position 118 (His-118) interacts with chlorophyll a. Tyr-126 is a binding site for pheophytin a. [CaMn4O5] cluster is bound by residues Asp-170 and Glu-189. The helical transmembrane segment at 197–218 (FHMLGVAGVFGGSLFSAMHGSL) threads the bilayer. His-198 is a binding site for chlorophyll a. Residues His-215 and 264 to 265 (SF) contribute to the a quinone site. His-215 provides a ligand contact to Fe cation. His-272 lines the Fe cation pocket. Residues 274 to 288 (FLAAWPVVGIWFTAL) form a helical membrane-spanning segment. The [CaMn4O5] cluster site is built by His-332, Glu-333, Asp-342, and Ala-344. Residues 345–353 (AVEAPSING) constitute a propeptide that is removed on maturation.

Belongs to the reaction center PufL/M/PsbA/D family. As to quaternary structure, PSII is composed of 1 copy each of membrane proteins PsbA, PsbB, PsbC, PsbD, PsbE, PsbF, PsbH, PsbI, PsbJ, PsbK, PsbL, PsbM, PsbT, PsbX, PsbY, PsbZ, Psb30/Ycf12, at least 3 peripheral proteins of the oxygen-evolving complex and a large number of cofactors. It forms dimeric complexes. The cofactor is The D1/D2 heterodimer binds P680, chlorophylls that are the primary electron donor of PSII, and subsequent electron acceptors. It shares a non-heme iron and each subunit binds pheophytin, quinone, additional chlorophylls, carotenoids and lipids. D1 provides most of the ligands for the Mn4-Ca-O5 cluster of the oxygen-evolving complex (OEC). There is also a Cl(-1) ion associated with D1 and D2, which is required for oxygen evolution. The PSII complex binds additional chlorophylls, carotenoids and specific lipids.. Tyr-161 forms a radical intermediate that is referred to as redox-active TyrZ, YZ or Y-Z. Post-translationally, C-terminally processed by CTPA; processing is essential to allow assembly of the oxygen-evolving complex and thus photosynthetic growth.

It is found in the plastid. The protein localises to the chloroplast thylakoid membrane. It carries out the reaction 2 a plastoquinone + 4 hnu + 2 H2O = 2 a plastoquinol + O2. In terms of biological role, photosystem II (PSII) is a light-driven water:plastoquinone oxidoreductase that uses light energy to abstract electrons from H(2)O, generating O(2) and a proton gradient subsequently used for ATP formation. It consists of a core antenna complex that captures photons, and an electron transfer chain that converts photonic excitation into a charge separation. The D1/D2 (PsbA/PsbD) reaction center heterodimer binds P680, the primary electron donor of PSII as well as several subsequent electron acceptors. The polypeptide is Photosystem II protein D1 (Medicago sativa (Alfalfa)).